A 380-amino-acid chain; its full sequence is Putative glutamate--cysteine ligase 2-1 (380 aa).

Belongs to the glutamate--cysteine ligase type 2 family. YbdK subfamily.

It catalyses the reaction L-cysteine + L-glutamate + ATP = gamma-L-glutamyl-L-cysteine + ADP + phosphate + H(+). Its function is as follows. ATP-dependent carboxylate-amine ligase which exhibits weak glutamate--cysteine ligase activity. In Mycolicibacterium vanbaalenii (strain DSM 7251 / JCM 13017 / BCRC 16820 / KCTC 9966 / NRRL B-24157 / PYR-1) (Mycobacterium vanbaalenii), this protein is Putative glutamate--cysteine ligase 2-1.